A 512-amino-acid polypeptide reads, in one-letter code: NADH-quinone oxidoreductase subunit N (512 aa).

A run of 14 helical transmembrane segments spans residues 32-52 (VLPALVLATGGVFLICLSVLF), 57-77 (FIIVRYVSGLILLLAFAAVFY), 97-117 (VLSFWLNLIYISMAIGTAAIV), 126-146 (IEFPEFYPLLLFATCGMTLMT), 151-171 (FILVFVALELMSICLYILIGM), 186-206 (FLLGSFSSGFMLMGIAFLFGG), 231-251 (IGLVLFITGVAFKIALFPYHA), 264-284 (VTGYMSTAAKAASIGLLLILY), 296-316 (WAWLPGILALCSMIYGNLLAL), 324-344 (MLAYSSIAHAGYVVAGISAGI), 348-368 (VLFYLIVYSFMSLGAFAILAY), 392-412 (AIAINIFFMSLAGVPPFGGFW), 431-451 (ILLIGGVTNSALALYYYLRIG), and 473-493 (VGVTGVVLFCLLMVSVGWFLL).

This sequence belongs to the complex I subunit 2 family. In terms of assembly, NDH-1 is composed of 14 different subunits. Subunits NuoA, H, J, K, L, M, N constitute the membrane sector of the complex.

Its subcellular location is the cell inner membrane. The enzyme catalyses a quinone + NADH + 5 H(+)(in) = a quinol + NAD(+) + 4 H(+)(out). Its function is as follows. NDH-1 shuttles electrons from NADH, via FMN and iron-sulfur (Fe-S) centers, to quinones in the respiratory chain. The immediate electron acceptor for the enzyme in this species is believed to be ubiquinone. Couples the redox reaction to proton translocation (for every two electrons transferred, four hydrogen ions are translocated across the cytoplasmic membrane), and thus conserves the redox energy in a proton gradient. In Leptospira interrogans serogroup Icterohaemorrhagiae serovar Lai (strain 56601), this protein is NADH-quinone oxidoreductase subunit N.